Here is a 191-residue protein sequence, read N- to C-terminus: Somatotropin (191 aa).

Zn(2+) is bound at residue H20. Cysteines 53 and 164 form a disulfide. Zn(2+) is bound at residue E173. C181 and C189 are oxidised to a cystine.

The protein belongs to the somatotropin/prolactin family.

The protein resides in the secreted. In terms of biological role, growth hormone plays an important role in growth control and is involved in the regulation of several anabolic processes. Implicated as an osmoregulatory substance important for seawater adaptation. The polypeptide is Somatotropin (GH) (Chelonia mydas (Green sea-turtle)).